Here is a 213-residue protein sequence, read N- to C-terminus: Alkylbase DNA glycosidase-like protein mag2 (213 aa).

DNA is bound by residues lysine 53, leucine 54, serine 61, histidine 91, glycine 94, serine 96, lysine 97, lysine 99, glutamate 102, lysine 137, glycine 138, lysine 140, threonine 143, serine 163, and threonine 164.

This sequence belongs to the alkylbase DNA glycosidase AlkA family.

Its subcellular location is the nucleus. In terms of biological role, alkylbase DNA glycosidase-like protein that shows no DNA glycosylase activity for alkylated bases. The molecular role of mag2 appears to be abasic (AP) site recognition and protection, while possibly facilitating damage signaling by structurally sculpting the DNA substrate. Stimulates AP site binding to mismatch repair protein mutS. The polypeptide is Alkylbase DNA glycosidase-like protein mag2 (Schizosaccharomyces pombe (strain 972 / ATCC 24843) (Fission yeast)).